The primary structure comprises 202 residues: Imidazoleglycerol-phosphate dehydratase (202 aa).

It belongs to the imidazoleglycerol-phosphate dehydratase family.

Its subcellular location is the cytoplasm. It carries out the reaction D-erythro-1-(imidazol-4-yl)glycerol 3-phosphate = 3-(imidazol-4-yl)-2-oxopropyl phosphate + H2O. It participates in amino-acid biosynthesis; L-histidine biosynthesis; L-histidine from 5-phospho-alpha-D-ribose 1-diphosphate: step 6/9. The protein is Imidazoleglycerol-phosphate dehydratase of Parasynechococcus marenigrum (strain WH8102).